The primary structure comprises 1072 residues: Dyslexia-associated protein KIAA0319 (1072 aa).

The first 20 residues, 1–20 (MAPPTGVLSSLLLLVTIAGC), serve as a signal peptide directing secretion. In terms of domain architecture, MANSC spans 21–99 (ARKQCSEGRT…PKKMGPIRSY (79 aa)). Residues 21 to 955 (ARKQCSEGRT…WDGESNCEWS (935 aa)) lie on the Extracellular side of the membrane. Disordered regions lie at residues 168–277 (LQPS…SLPP) and 295–327 (VTPG…SPTT). Residues Asn-196, Asn-219, and Asn-262 are each glycosylated (N-linked (GlcNAc...) asparagine). Residues 254 to 265 (SQLQEQSSNSSG) show a composition bias toward polar residues. Residues 311-320 (AAPSESTPSE) show a composition bias toward low complexity. PKD domains are found at residues 341 to 427 (DNLI…VKPA), 435 to 524 (VAVV…VNNA), 530 to 620 (VANA…VQPE), 621 to 714 (NNRP…VKKE), and 720 to 811 (RARA…VQPD). 6 N-linked (GlcNAc...) asparagine glycosylation sites follow: Asn-394, Asn-421, Asn-498, Asn-513, Asn-536, and Asn-551. Residue Asn-733 is glycosylated (N-linked (GlcNAc...) asparagine). A helical membrane pass occupies residues 956–976 (IFYVTVLAFTLIVLTGGFTWL). The Cytoplasmic portion of the chain corresponds to 977 to 1072 (CICCCKRQKR…ASFSYCSKDR (96 aa)). An Endocytosis signal motif is present at residues 995 to 998 (YTIL). The interval 1045–1072 (KMERGNPKVSMNGSIRNGASFSYCSKDR) is disordered. Residues 1053-1072 (VSMNGSIRNGASFSYCSKDR) are compositionally biased toward polar residues.

Homodimer. Interacts with AP2M1; required for clathrin-mediated endocytosis. Post-translationally, N-glycosylated. In terms of processing, O-glycosylated. Shedding of the extracellular domain and intramembrane cleavage produce several proteolytic products. The intramembrane cleavage releases a soluble cytoplasmic polypeptide that translocates to the nucleolus. As to expression, detected in adult brain cortex and fetal frontal lobe (at protein level). Highly expressed in brain cortex, putamen, amygdala, hippocampus and cerebellum.

The protein localises to the cell membrane. The protein resides in the early endosome membrane. In terms of biological role, involved in neuronal migration during development of the cerebral neocortex. May function in a cell autonomous and a non-cell autonomous manner and play a role in appropriate adhesion between migrating neurons and radial glial fibers. May also regulate growth and differentiation of dendrites. This is Dyslexia-associated protein KIAA0319 (KIAA0319) from Homo sapiens (Human).